We begin with the raw amino-acid sequence, 515 residues long: Ribosome assembly protein 4 (515 aa).

An interaction with MDN1 region spans residues 20–128 (REVAIIPKDL…LLYTPRAVFK (109 aa)). A ubiquitin-like (UBL) domain region spans residues 29–125 (LPNVSIKFQA…QITLLYTPRA (97 aa)). 8 WD repeats span residues 141 to 181 (GHGS…PMHT), 184 to 223 (GHYN…CLGD), 227 to 273 (GHSK…CQYT), 276 to 314 (GHTN…RCIN), 352 to 396 (AQKK…KPIA), 400 to 439 (GHQK…FIST), 442 to 481 (GHVA…LSVD), and 484 to 515 (GHKD…LWTH).

The protein belongs to the NLE1/RSA4 family. Associates with the pre-60S ribosomal particle. Interacts (via WD repeats) with uL18 (RPL5). Interacts (via UBL domain) with MDN1 (via VWFA/MIDAS domain). Interacts (via WD repeats) with NSA2.

The protein localises to the nucleus. Its subcellular location is the nucleolus. In terms of biological role, involved in ribosome biogenesis. Required for processing and efficient intra-nuclear transport of pre-60S ribosomal subunits. Interacts with the AAA-ATPase Midasin (MDN1/REA1), which is essential for the ATP-dependent dissociation of a group of nonribosomal factors from the pre-60S particle. The chain is Ribosome assembly protein 4 from Saccharomyces cerevisiae (strain ATCC 204508 / S288c) (Baker's yeast).